Reading from the N-terminus, the 251-residue chain is Cell division protein ZapD (251 aa).

The protein belongs to the ZapD family. In terms of assembly, interacts with FtsZ.

It localises to the cytoplasm. Functionally, cell division factor that enhances FtsZ-ring assembly. Directly interacts with FtsZ and promotes bundling of FtsZ protofilaments, with a reduction in FtsZ GTPase activity. The chain is Cell division protein ZapD from Burkholderia multivorans (strain ATCC 17616 / 249).